The sequence spans 2776 residues: A-kinase anchor protein 13 (2776 aa).

Disordered stretches follow at residues 371–401 (KNKDVGRKGEEAEPASAMDSGSASHQDSCLQ), 452–518 (EPDA…TETT), 547–584 (PAEASPALSSEEIPTEKPGMETQERGCEGGTTSDQSSP), 618–641 (TMPGPSSDGMPEQNSESHARPAQS), 653–689 (EAGTPSAEATHQPSTVTSSGRLEECGSGKASLPESTM), 760–871 (VSQT…SPTA), 910–951 (ALGQ…IPGL), 995–1029 (GAAKSLVPPRTSLSADSKQKASSTEQSGSSLLPSG), 1431–1508 (LCDT…MDSI), 1527–1546 (PFRRHSWGPGKNAASDAEMN), and 1565–1603 (RRSFSLEGLTGGGVGNKPSSSLEMSSANSSELRNPFGGE). Residues 389-401 (DSGSASHQDSCLQ) are compositionally biased toward polar residues. The interval 493-515 (QNNKPQVGEGTKERLENSDSSTT) is important for interaction with PRKAR2A. Positions 560 to 573 (PTEKPGMETQERGC) are enriched in basic and acidic residues. Residues 659–672 (AEATHQPSTVTSSG) are compositionally biased toward polar residues. The span at 773–788 (SPPASSFSLASSPESE) shows a compositional bias: low complexity. Ser-784 carries the post-translational modification Phosphoserine. Thr-809 is modified (phosphothreonine). Basic and acidic residues-rich tracts occupy residues 820 to 834 (DGPDGRDLSDTDKVG) and 914 to 940 (DGKDRAMSCSSVKEDVHSSEMSREDQR). Residue Thr-941 is modified to Phosphothreonine. A compositionally biased stretch (polar residues) spans 1005–1020 (TSLSADSKQKASSTEQ). Over residues 1433 to 1444 (DTTGSSSSTDDT) the composition is skewed to low complexity. The span at 1454–1476 (GSDVSLPQTSKLNRSRNHQSANG) shows a compositional bias: polar residues. A phosphoserine mark is found at Ser-1455, Ser-1473, Ser-1507, Ser-1532, and Ser-1569. The important for interaction with MAP2K3 stretch occupies residues 1552-1678 (RALGHVVRRP…SRPFHSTSAN (127 aa)). The span at 1583–1594 (SSSLEMSSANSS) shows a compositional bias: low complexity. Residues Ser-1608, Ser-1611, and Ser-1613 each carry the phosphoserine modification. Residue Lys-1637 is modified to N6-methyllysine. Positions 1711–1756 (TFSYIRNKMSSSKKSKEKEKEKDKIKEKEKDSKEKEKDKKTLNGHT) are disordered. The segment covering 1724–1751 (KSKEKEKEKDKIKEKEKDSKEKEKDKKT) has biased composition (basic and acidic residues). The segment at 1754–1801 (GHTFSPIPIVGPISCSQCMKPFTNKDAYTCAGCGAFVHKGCRENLASC) adopts a Phorbol-ester/DAG-type zinc-finger fold. Phosphoserine is present on residues Ser-1839, Ser-1858, and Ser-1892. Residues 1882 to 2776 (MSNTWKFLSH…VPAEGEEIFC (895 aa)) are interaction with ESR1. The residue at position 1893 (Thr-1893) is a Phosphothreonine. Phosphoserine occurs at positions 1895 and 1908. In terms of domain architecture, DH spans 1957 to 2154 (KRQEVIYELM…KDVIGAVDSK (198 aa)). The region spanning 2194–2296 (KLVRDGSVFL…WIQIIQDTIN (103 aa)) is the PH domain. 2 positions are modified to phosphoserine: Ser-2308 and Ser-2361. Residues 2308–2345 (SENEEEKKLLDTKARELKEQLQQKDQQILLLLEEKEMI) adopt a coiled-coil conformation. A Phosphothreonine modification is found at Thr-2431. The segment at 2436–2471 (DCHQMNASKGGEKEEGDDGQDLRRTESDSGLKKGGN) is disordered. Over residues 2455–2466 (QDLRRTESDSGL) the composition is skewed to basic and acidic residues. Ser-2527 and Ser-2530 each carry phosphoserine. A coiled-coil region spans residues 2532–2646 (LIEQEKQRSL…ERLSQRQMDQ (115 aa)). Disordered regions lie at residues 2549 to 2605 (ANLQ…EELQ) and 2626 to 2776 (EREQ…EIFC). 2 stretches are compositionally biased toward basic and acidic residues: residues 2558–2605 (HLEE…EELQ) and 2626–2640 (EREQEQLRRDTERLS). Composition is skewed to polar residues over residues 2641-2653 (QRQMDQNLCQVSN), 2665-2700 (LPNSDEFSSPSAPSVTKSGSLDSELSVSPKRNSISR), and 2713-2727 (SASQTKVPEGQSQAP). A phosphoserine mark is found at Ser-2673 and Ser-2692.

As to quaternary structure, interacts with the cAMP-dependent protein kinase (PKA) holoenzyme and with the regulatory subunit PRKAR2A. Interacts with RHOA. Also interacts with RHOB and RHOC. Identified in a ternary complex with RHOA and PRKAR2A. Identified in a complex with NR3C1 and RHOA. Interacts with BRAF and KSR1. Identified in a complex with BRAF and KSR1. Component of a signaling complex containing at least AKAP13, PKN1, MAPK14, ZAK and MAP2K3. Within this complex, AKAP13 interacts directly with PKN1, which in turn recruits MAPK14, MAP2K3 and ZAK. Interacts (phosphorylated form) with YWHAB and YWHAZ. Interaction with YWHAB inhibits activation of RHOA, interferes with PKN1 binding and activation of MAP kinases. Interacts with GNA12. Interacts with IKBKB. Interacts with ESR1, THRA, PPARA and NME2. Interacts (via the C-terminal domain after the PH domain) with MEF2C and RXRB. Interacts (via the C-terminal domain after the PH domain) with PRKD1. Detected in embryonic heart, limb bud, first branchial arch and forebrain (at protein level). Detected in heart. Detected in perichondrium, but not in the bone growth plate.

It is found in the cytoplasm. The protein resides in the cytosol. Its subcellular location is the cell cortex. It localises to the cytoskeleton. The protein localises to the nucleus. It is found in the membrane. Its function is as follows. Scaffold protein that plays an important role in assembling signaling complexes downstream of several types of G protein-coupled receptors. Activates RHOA in response to signaling via G protein-coupled receptors via its function as Rho guanine nucleotide exchange factor. May also activate other Rho family members. Part of a kinase signaling complex that links ADRA1A and ADRA1B adrenergic receptor signaling to the activation of downstream p38 MAP kinases, such as MAPK11 and MAPK14. Part of a signaling complex that links ADRA1B signaling to the activation of RHOA and IKBKB/IKKB, leading to increased NF-kappa-B transcriptional activity. Part of a RHOA-dependent signaling cascade that mediates responses to lysophosphatidic acid (LPA), a signaling molecule that activates G-protein coupled receptors and potentiates transcriptional activation of the glucocorticoid receptor NR3C1. Part of a signaling cascade that stimulates MEF2C-dependent gene expression in response to lysophosphatidic acid (LPA). Part of a signaling pathway that activates MAPK11 and/or MAPK14 and leads to increased transcription activation of the estrogen receptors ESR1 and ESR2. Part of a signaling cascade that links cAMP and EGFR signaling to BRAF signaling and to PKA-mediated phosphorylation of KSR1, leading to the activation of downstream MAP kinases, such as MAPK1 or MAPK3. Functions as a scaffold protein that anchors cAMP-dependent protein kinase (PKA) and PRKD1. This promotes activation of PRKD1, leading to increased phosphorylation of HDAC5 and ultimately cardiomyocyte hypertrophy. Has no guanine nucleotide exchange activity on CDC42, Ras or Rac. Required for normal embryonic heart development, and in particular for normal sarcomere formation in the developing cardiomyocytes. Plays a role in cardiomyocyte growth and cardiac hypertrophy in response to activation of the beta-adrenergic receptor by phenylephrine or isoproterenol. Required for normal adaptive cardiac hypertrophy in response to pressure overload. Plays a role in osteogenesis. The protein is A-kinase anchor protein 13 of Mus musculus (Mouse).